Here is a 289-residue protein sequence, read N- to C-terminus: Serine/threonine-protein phosphatase Pgam5, mitochondrial (289 aa).

This sequence belongs to the phosphoglycerate mutase family. BPG-dependent PGAM subfamily. In terms of assembly, interacts with Pk92B/ASK1.

Its subcellular location is the mitochondrion outer membrane. It catalyses the reaction O-phospho-L-seryl-[protein] + H2O = L-seryl-[protein] + phosphate. It carries out the reaction O-phospho-L-threonyl-[protein] + H2O = L-threonyl-[protein] + phosphate. Displays phosphatase activity for serine/threonine residues, and dephosphorylates and activates Pk92B kinase. Has apparently no phosphoglycerate mutase activity. The polypeptide is Serine/threonine-protein phosphatase Pgam5, mitochondrial (Drosophila mojavensis (Fruit fly)).